Here is a 175-residue protein sequence, read N- to C-terminus: MSIINFWRQFGRRYFWSHLLLGMVAAGIGMPSLVSAHAENPSQTDTPSSQNRQSQALIAFDNLFLRQSVQNPASSFTFNYWQQHAVKNVIKQLSFAFTIHSPELMVKAKDEPSPVANVAEVMLDTLYALLTQAPSSTLVNLPISRGVLTENRISYHTGLWLAQIRGIRAGPYLTA.

An N-terminal signal peptide occupies residues 1 to 38 (MSIINFWRQFGRRYFWSHLLLGMVAAGIGMPSLVSAHA).

Belongs to the SecM family.

The protein resides in the cytoplasm. The protein localises to the cytosol. It localises to the periplasm. Its function is as follows. Regulates secA expression by translational coupling of the secM secA operon. Translational pausing at a specific Pro residue 5 residues before the end of the protein may allow disruption of a mRNA repressor helix that normally suppresses secA translation initiation. The polypeptide is Secretion monitor (Proteus mirabilis (strain HI4320)).